The following is a 201-amino-acid chain: Recombination protein RecR (201 aa).

The segment at 60–75 (CKTCGNIDTQNPCTVC) adopts a C4-type zinc-finger fold. The Toprim domain maps to 83 to 178 (AIIVVVADVA…KVTRLAHGVP (96 aa)).

The protein belongs to the RecR family.

In terms of biological role, may play a role in DNA repair. It seems to be involved in an RecBC-independent recombinational process of DNA repair. It may act with RecF and RecO. In Rhodopseudomonas palustris (strain BisA53), this protein is Recombination protein RecR.